The following is a 202-amino-acid chain: Small ribosomal subunit protein uS4c (202 aa).

Residues 89 to 152 (MRLDNIIFRL…QSNTFINNCI (64 aa)) form the S4 RNA-binding domain.

The protein belongs to the universal ribosomal protein uS4 family. In terms of assembly, part of the 30S ribosomal subunit. Contacts protein S5. The interaction surface between S4 and S5 is involved in control of translational fidelity.

The protein localises to the plastid. One of the primary rRNA binding proteins, it binds directly to 16S rRNA where it nucleates assembly of the body of the 30S subunit. Functionally, with S5 and S12 plays an important role in translational accuracy. In Epifagus virginiana (Beechdrops), this protein is Small ribosomal subunit protein uS4c (rps4).